A 156-amino-acid polypeptide reads, in one-letter code: Biotin carboxyl carrier protein of acetyl-CoA carboxylase (156 aa).

Residues 73–156 (PAAAEISGHI…EFDEPLVVIE (84 aa)) form the Biotinyl-binding domain. Lysine 122 carries the N6-biotinyllysine modification.

In terms of assembly, homodimer.

It participates in lipid metabolism; fatty acid biosynthesis. Functionally, this protein is a component of the acetyl coenzyme A carboxylase complex; first, biotin carboxylase catalyzes the carboxylation of the carrier protein and then the transcarboxylase transfers the carboxyl group to form malonyl-CoA. This chain is Biotin carboxyl carrier protein of acetyl-CoA carboxylase (accB), found in Escherichia coli O6:H1 (strain CFT073 / ATCC 700928 / UPEC).